We begin with the raw amino-acid sequence, 196 residues long: Imidazoleglycerol-phosphate dehydratase (196 aa).

It belongs to the imidazoleglycerol-phosphate dehydratase family.

The protein resides in the cytoplasm. It catalyses the reaction D-erythro-1-(imidazol-4-yl)glycerol 3-phosphate = 3-(imidazol-4-yl)-2-oxopropyl phosphate + H2O. It functions in the pathway amino-acid biosynthesis; L-histidine biosynthesis; L-histidine from 5-phospho-alpha-D-ribose 1-diphosphate: step 6/9. This Desulforamulus reducens (strain ATCC BAA-1160 / DSM 100696 / MI-1) (Desulfotomaculum reducens) protein is Imidazoleglycerol-phosphate dehydratase.